Consider the following 4080-residue polypeptide: Hybrid PKS-NRPS synthetase poxE (4080 aa).

The Ketosynthase family 3 (KS3) domain maps to 8–442 (REPIAIVGSG…GTNAHAIIEA (435 aa)). Residues Cys181, His320, and His362 each act as for beta-ketoacyl synthase activity in the active site. The malonyl-CoA:ACP transacylase (MAT) domain stretch occupies residues 554 to 878 (VFTGQGAQWA…QRGMNDVEAM (325 aa)). Residues 944–1078 (HPILGTRCPD…GRLVITYGPV (135 aa)) are N-terminal hotdog fold. Positions 944-1246 (HPILGTRCPD…AVPLEATNAD (303 aa)) constitute a PKS/mFAS DH domain. Residues 945–1243 (PILGTRCPDG…GIHAVPLEAT (299 aa)) are dehydratase (DH) domain. His976 acts as the Proton acceptor; for dehydratase activity in catalysis. The segment at 1093–1246 (MVDVPSERFY…AVPLEATNAD (154 aa)) is C-terminal hotdog fold. Asp1152 functions as the Proton donor; for dehydratase activity in the catalytic mechanism. Residues 1400-1585 (HFSDYLASVV…GVDTFTSDAD (186 aa)) are methyltransferase (MT) domain. The tract at residues 2118–2292 (TYWLVGLTGS…AGSVMNIGAI (175 aa)) is ketoreductase (KR)domain. The interval 2399–2478 (TTDEIYEVIK…TIGEIIKFVL (80 aa)) is peptidyl carrier protein. Residues 2405 to 2481 (EVIKECFIVK…EIIKFVLEKL (77 aa)) form the Carrier 1 domain. Position 2441 is an O-(pantetheine 4'-phosphoryl)serine (Ser2441). Residues 2488–2569 (SLGLSPPTGA…AASPSIHTEE (82 aa)) are disordered. Basic and acidic residues predominate over residues 2511–2525 (VVVERRNVPRLEKKI). Positions 2528–2545 (SAGSRTSSSVTGTSKSVS) are enriched in low complexity. The span at 2551–2565 (DTASSQTSEAASPSI) shows a compositional bias: polar residues. The segment at 2607 to 3036 (KEPLSFGQSR…DSKQPGGHVS (430 aa)) is condensation. Positions 3069–3478 (DMAKQYPQKL…DGRLRIEGRI (410 aa)) are adenylation. The 81-residue stretch at 3593–3673 (AHLNEAQAQM…KMALLIKPQE (81 aa)) folds into the Carrier 2 domain. Residues 3598–3670 (AQAQMVQLWE…TLEKMALLIK (73 aa)) form a thiolation region. An O-(pantetheine 4'-phosphoryl)serine modification is found at Ser3633. A reductase (RED) domain region spans residues 3740–3959 (LTGATGFIGQ…DFVPVEQVVR (220 aa)).

In the C-terminal section; belongs to the NRP synthetase family.

Its pathway is secondary metabolite biosynthesis. Hybrid PKS-NRPS synthetase; part of the gene cluster that mediates the biosynthesis of oxaleimides, cytotoxic compounds containing an unusual disubstituted succinimide moiety. The first step of the pathway is provided by the HR-PKS poxF that serves in a new mode of collaborative biosynthesis with the PKS-NRPS poxE, by providing the olefin containing amino acid substrate via the synthesis of an ACP-bound dec-4-enoate. The cytochrome P450 monooxygenase poxM-catalyzed oxidation at the alpha-position creates the enzyme-bound 2-hydroxydec-4-enoyl-ACP thioester, which may be prone to spontaneous hydrolysis to yield 2-hydroxydec-4-enoic acid due to increased electrophilicity of the carbonyl. 2-hydroxydec-4-enoic acid can then be further oxidized by poxM to yield the alpha-ketoacid 2-oxodec-4-enoicacid, which is reductively aminated by the aminotransferase poxL to yield (S,E)-2-aminodec-4-enoic acid. The Hybrid PKS-NRPS synthetase poxE then performs condensation between the octaketide product of its PKS modules and the amino group of (S,E)-2-aminodec-4-enoic acid which is activated and incorporated by the adenylation domain. The resulting aminoacyl product can be cyclized by the Diels-Alderase PoxQ and reductively released by the reductive (R) domain of poxE to yield an aldehyde intermediate. The released aldehyde is then substrate for a Knoevenagel condensation by the hydrolyase poxO followed by an oxidation at the 5-position of the pyrrolidone ring. The presence of the olefin from the amino acid building block allows for migration of the substituted allyl group to occur. This allylic transposition reaction takes place in a conjugate addition, semipinacol-like fashion to yield a succinimide intermediate. Iterative two-electron oxidations of the C7 methyl of the succinimide intermediate to the carboxylic acid can be catalyzed by one of two remaining cytochrome P450 monooxygenasess poxC or poxD to yield oxaleimide A. Subsequent oxidation yields the maleimide scaffold oxaleimide I. Both oxaleimide A and oxaleimide I can undergo oxidative modifications in the decalin ring to yield the series of products oxaleimides B to H. This Penicillium oxalicum protein is Hybrid PKS-NRPS synthetase poxE.